The sequence spans 199 residues: Holliday junction branch migration complex subunit RuvA (199 aa).

The segment at 1-64 (MIGRISGLLL…EDGHFLYGFA (64 aa)) is domain I. The segment at 65 to 143 (TDEERTAFRQ…KALPQVAGAR (79 aa)) is domain II. A flexible linker region spans residues 144–154 (LAAVAGGAPDA). The segment at 154–199 (AKSDILNALLALGYNEKEALGAMKGLAEDTGVSDGIRQALKLLSKA) is domain III.

The protein belongs to the RuvA family. As to quaternary structure, homotetramer. Forms an RuvA(8)-RuvB(12)-Holliday junction (HJ) complex. HJ DNA is sandwiched between 2 RuvA tetramers; dsDNA enters through RuvA and exits via RuvB. An RuvB hexamer assembles on each DNA strand where it exits the tetramer. Each RuvB hexamer is contacted by two RuvA subunits (via domain III) on 2 adjacent RuvB subunits; this complex drives branch migration. In the full resolvosome a probable DNA-RuvA(4)-RuvB(12)-RuvC(2) complex forms which resolves the HJ.

The protein localises to the cytoplasm. Functionally, the RuvA-RuvB-RuvC complex processes Holliday junction (HJ) DNA during genetic recombination and DNA repair, while the RuvA-RuvB complex plays an important role in the rescue of blocked DNA replication forks via replication fork reversal (RFR). RuvA specifically binds to HJ cruciform DNA, conferring on it an open structure. The RuvB hexamer acts as an ATP-dependent pump, pulling dsDNA into and through the RuvAB complex. HJ branch migration allows RuvC to scan DNA until it finds its consensus sequence, where it cleaves and resolves the cruciform DNA. This Azoarcus sp. (strain BH72) protein is Holliday junction branch migration complex subunit RuvA.